Consider the following 24-residue polypeptide: Pseudin-2 (24 aa).

As to expression, expressed by the skin glands.

Its subcellular location is the secreted. In terms of biological role, antimicrobial peptide with activity against fungus (C.albicans) and Gram-positive and Gram-negative bacteria (S.aureus and E.coli). Also has low hemolytic activity against human erythrocytes. This chain is Pseudin-2, found in Pseudis paradoxa (Paradoxical frog).